A 94-amino-acid chain; its full sequence is ESAT-6-like protein EsxN (94 aa).

It belongs to the WXG100 family. ESAT-6 subfamily.

The protein localises to the secreted. This Mycobacterium bovis (strain ATCC BAA-935 / AF2122/97) protein is ESAT-6-like protein EsxN.